Here is an 837-residue protein sequence, read N- to C-terminus: Protein translocase subunit SecA (837 aa).

ATP contacts are provided by residues glutamine 85, 103 to 107 (GEGKT), and aspartate 493. Zn(2+) contacts are provided by cysteine 821, cysteine 823, cysteine 832, and histidine 833.

The protein belongs to the SecA family. Monomer and homodimer. Part of the essential Sec protein translocation apparatus which comprises SecA, SecYEG and auxiliary proteins SecDF. Other proteins may also be involved. The cofactor is Zn(2+).

Its subcellular location is the cell membrane. The protein localises to the cytoplasm. The enzyme catalyses ATP + H2O + cellular proteinSide 1 = ADP + phosphate + cellular proteinSide 2.. Its function is as follows. Part of the Sec protein translocase complex. Interacts with the SecYEG preprotein conducting channel. Has a central role in coupling the hydrolysis of ATP to the transfer of proteins into and across the cell membrane, serving as an ATP-driven molecular motor driving the stepwise translocation of polypeptide chains across the membrane. The protein is Protein translocase subunit SecA of Streptococcus pneumoniae (strain ATCC BAA-255 / R6).